The sequence spans 373 residues: PqqA peptide cyclase (373 aa).

Residues 9 to 224 (LTKPRWLLAE…QSYKEKVKGR (216 aa)) enclose the Radical SAM core domain. [4Fe-4S] cluster-binding residues include Cys-23, Cys-27, and Cys-30.

Belongs to the radical SAM superfamily. PqqE family. As to quaternary structure, interacts with PqqD. The interaction is necessary for activity of PqqE. [4Fe-4S] cluster serves as cofactor.

It carries out the reaction [PQQ precursor protein] + S-adenosyl-L-methionine = E-Y cross-linked-[PQQ precursor protein] + 5'-deoxyadenosine + L-methionine + H(+). The protein operates within cofactor biosynthesis; pyrroloquinoline quinone biosynthesis. Its function is as follows. Catalyzes the cross-linking of a glutamate residue and a tyrosine residue in the PqqA protein as part of the biosynthesis of pyrroloquinoline quinone (PQQ). The polypeptide is PqqA peptide cyclase (Methylococcus capsulatus (strain ATCC 33009 / NCIMB 11132 / Bath)).